The following is a 166-amino-acid chain: Lipoprotein signal peptidase (166 aa).

The next 4 helical transmembrane spans lie at 9-29, 45-65, 71-91, and 100-120; these read ASGALAPWLGISLIVILFDQL, ALTSFFNLVLVYNRGAAFGFL, WQRWAFTALGVGATLVICFLL, and FSLSLALILGGALGNVIDRLV. Catalysis depends on residues D126 and D144. The helical transmembrane segment at 135-155 threads the bilayer; sequence WHFPAFNLADSAITIGAVLLI.

It belongs to the peptidase A8 family.

Its subcellular location is the cell inner membrane. The enzyme catalyses Release of signal peptides from bacterial membrane prolipoproteins. Hydrolyzes -Xaa-Yaa-Zaa-|-(S,diacylglyceryl)Cys-, in which Xaa is hydrophobic (preferably Leu), and Yaa (Ala or Ser) and Zaa (Gly or Ala) have small, neutral side chains.. Its pathway is protein modification; lipoprotein biosynthesis (signal peptide cleavage). Functionally, this protein specifically catalyzes the removal of signal peptides from prolipoproteins. In Burkholderia multivorans (strain ATCC 17616 / 249), this protein is Lipoprotein signal peptidase.